The sequence spans 395 residues: Nucleoside diphosphate kinase homolog 7 (395 aa).

One can recognise a DM10 domain in the interval Gln22–Lys110.

The protein belongs to the NDK family. As to quaternary structure, component of sperm flagellar doublet microtubules. Component of the gamma-tubulin ring complex.

The protein resides in the cytoplasm. Its subcellular location is the cytoskeleton. It localises to the microtubule organizing center. The protein localises to the centrosome. It is found in the nucleus. The protein resides in the spindle. Its subcellular location is the cilium axoneme. It localises to the flagellum axoneme. The protein localises to the cell projection. It is found in the cilium. Its function is as follows. Possesses an intrinsic kinase activity. Displays 3'-5' exonuclease activity with a preference for single-stranded DNA. Does not seem to have nucleoside diphosphate kinase activity. Functional component of the gamma-tubulin ring complex, implicated in the regulation of the microtubule-nucleating activity of the gamma-tubulin ring complex in centrosomes, in a kinase activity-dependent manner. Part of the dynein-decorated doublet microtubules (DMTs) in cilia axoneme, which is required for motile cilia beating. This Mus musculus (Mouse) protein is Nucleoside diphosphate kinase homolog 7.